Reading from the N-terminus, the 411-residue chain is Adenylosuccinate synthetase (411 aa).

GTP-binding positions include 11-17 (GDEGKGK) and 39-41 (GHT). Asp-12 acts as the Proton acceptor in catalysis. Mg(2+) contacts are provided by Asp-12 and Gly-39. IMP contacts are provided by residues 12–15 (DEGK), 37–40 (NAGH), Thr-121, Arg-135, Gln-215, Thr-230, and Arg-294. The active-site Proton donor is His-40. 290-296 (TTTKRPR) is a substrate binding site. GTP-binding positions include Arg-296, 322 to 324 (KLD), and 400 to 402 (STS).

The protein belongs to the adenylosuccinate synthetase family. Homodimer. Mg(2+) is required as a cofactor.

The protein localises to the cytoplasm. The enzyme catalyses IMP + L-aspartate + GTP = N(6)-(1,2-dicarboxyethyl)-AMP + GDP + phosphate + 2 H(+). The protein operates within purine metabolism; AMP biosynthesis via de novo pathway; AMP from IMP: step 1/2. Plays an important role in the de novo pathway of purine nucleotide biosynthesis. Catalyzes the first committed step in the biosynthesis of AMP from IMP. The sequence is that of Adenylosuccinate synthetase from Helicobacter acinonychis (strain Sheeba).